The chain runs to 566 residues: Transcriptional regulatory protein XylR (566 aa).

In terms of domain architecture, Sigma-54 factor interaction spans 235–464 (GIGHSPAYKR…LENALERGVI (230 aa)). ATP is bound by residues 263–270 (GETGVGKE) and 326–335 (ANGGTIFLDE). Positions 534-553 (ISQAARLLGLTRPAMAYRLK) form a DNA-binding region, H-T-H motif.

In terms of biological role, regulatory protein of the TOL plasmid xyl operons. In the presence of m-xylene or m-methylbenzyl alcohol XylR activates both the xylCMABN operon and the regulatory gene xylS; xylS itself activates the xylXYZLTEGFJQKIH operon. XylR interacts with sigma-54. The chain is Transcriptional regulatory protein XylR (xylR) from Pseudomonas putida (Arthrobacter siderocapsulatus).